The chain runs to 77 residues: Cysteine-rich protein 1 (77 aa).

An LIM zinc-binding domain is found at 2-63; the sequence is PKCPKCSKEV…HPCYAAMFGP (62 aa). N6-acetyllysine occurs at positions 9 and 22. At arginine 68 the chain carries Omega-N-methylarginine.

Seems to have a role in zinc absorption and may function as an intracellular zinc transport protein. The sequence is that of Cysteine-rich protein 1 (CRIP1) from Bos taurus (Bovine).